The sequence spans 276 residues: ATP synthase subunit delta (276 aa).

It belongs to the ATPase delta chain family. As to quaternary structure, F-type ATPases have 2 components, F(1) - the catalytic core - and F(0) - the membrane proton channel. F(1) has five subunits: alpha(3), beta(3), gamma(1), delta(1), epsilon(1). F(0) has three main subunits: a(1), b(2) and c(10-14). The alpha and beta chains form an alternating ring which encloses part of the gamma chain. F(1) is attached to F(0) by a central stalk formed by the gamma and epsilon chains, while a peripheral stalk is formed by the delta and b chains.

It is found in the cell membrane. F(1)F(0) ATP synthase produces ATP from ADP in the presence of a proton or sodium gradient. F-type ATPases consist of two structural domains, F(1) containing the extramembraneous catalytic core and F(0) containing the membrane proton channel, linked together by a central stalk and a peripheral stalk. During catalysis, ATP synthesis in the catalytic domain of F(1) is coupled via a rotary mechanism of the central stalk subunits to proton translocation. Functionally, this protein is part of the stalk that links CF(0) to CF(1). It either transmits conformational changes from CF(0) to CF(1) or is implicated in proton conduction. The chain is ATP synthase subunit delta from Frankia casuarinae (strain DSM 45818 / CECT 9043 / HFP020203 / CcI3).